Here is a 445-residue protein sequence, read N- to C-terminus: Phosphoglucosamine mutase (445 aa).

Ser-102 (phosphoserine intermediate) is an active-site residue. Mg(2+)-binding residues include Ser-102, Asp-241, Asp-243, and Asp-245. Position 102 is a phosphoserine (Ser-102).

The protein belongs to the phosphohexose mutase family. Mg(2+) is required as a cofactor. Post-translationally, activated by phosphorylation.

The enzyme catalyses alpha-D-glucosamine 1-phosphate = D-glucosamine 6-phosphate. Catalyzes the conversion of glucosamine-6-phosphate to glucosamine-1-phosphate. The chain is Phosphoglucosamine mutase from Escherichia coli O157:H7.